The sequence spans 459 residues: Mycothione reductase (459 aa).

Position 31 to 39 (Glu-31 to Cys-39) interacts with FAD. A disulfide bridge links Cys-39 with Cys-44. The Proton acceptor role is filled by His-444.

It belongs to the class-I pyridine nucleotide-disulfide oxidoreductase family. As to quaternary structure, homodimer. Requires FAD as cofactor.

It carries out the reaction 2 mycothiol + NADP(+) = mycothione + NADPH + H(+). The enzyme catalyses 2 mycothiol + NAD(+) = mycothione + NADH + H(+). In terms of biological role, catalyzes the NAD(P)H-dependent reduction of mycothione (the oxidized disulfide form of mycothiol) to mycothiol. This Mycobacterium tuberculosis (strain CDC 1551 / Oshkosh) protein is Mycothione reductase (mtr).